The following is a 282-amino-acid chain: E3 ubiquitin-protein ligase Siah1 (282 aa).

Residues 1–28 (MSRQTATALPTGTSKCPPSQRVPTLSGT) are disordered. The RING-type zinc-finger motif lies at 41–76 (CPVCFDYVLPPILQCQSGHLVCSNCRPKLTCCPTCR). The interval 90–282 (VANSVLFPCK…LGINVTISMC (193 aa)) is SBD. An SIAH-type zinc finger spans residues 93–153 (SVLFPCKYAS…VMPHLLHQHK (61 aa)). Zn(2+) is bound by residues cysteine 98, cysteine 105, histidine 117, cysteine 121, cysteine 128, cysteine 135, histidine 147, and histidine 152.

The protein belongs to the SINA (Seven in absentia) family. Homodimer.

The catalysed reaction is S-ubiquitinyl-[E2 ubiquitin-conjugating enzyme]-L-cysteine + [acceptor protein]-L-lysine = [E2 ubiquitin-conjugating enzyme]-L-cysteine + N(6)-ubiquitinyl-[acceptor protein]-L-lysine.. It functions in the pathway protein modification; protein ubiquitination. E3 ubiquitin-protein ligase that mediates ubiquitination and subsequent proteasomal degradation of target proteins. E3 ubiquitin ligases accept ubiquitin from an E2 ubiquitin-conjugating enzyme in the form of a thioester and then directly transfers the ubiquitin to targeted substrates. It probably triggers the ubiquitin-mediated degradation of different substrates. The sequence is that of E3 ubiquitin-protein ligase Siah1 (siah1) from Danio rerio (Zebrafish).